The chain runs to 352 residues: S-adenosylmethionine:tRNA ribosyltransferase-isomerase (352 aa).

This sequence belongs to the QueA family. Monomer.

Its subcellular location is the cytoplasm. It carries out the reaction 7-aminomethyl-7-carbaguanosine(34) in tRNA + S-adenosyl-L-methionine = epoxyqueuosine(34) in tRNA + adenine + L-methionine + 2 H(+). It functions in the pathway tRNA modification; tRNA-queuosine biosynthesis. In terms of biological role, transfers and isomerizes the ribose moiety from AdoMet to the 7-aminomethyl group of 7-deazaguanine (preQ1-tRNA) to give epoxyqueuosine (oQ-tRNA). This chain is S-adenosylmethionine:tRNA ribosyltransferase-isomerase, found in Cupriavidus necator (strain ATCC 17699 / DSM 428 / KCTC 22496 / NCIMB 10442 / H16 / Stanier 337) (Ralstonia eutropha).